A 128-amino-acid chain; its full sequence is Probable 4-amino-4-deoxy-L-arabinose-phosphoundecaprenol flippase subunit ArnF (128 aa).

Residues 1-2 (MG) lie on the Cytoplasmic side of the membrane. A helical transmembrane segment spans residues 3-23 (LMWGLFSVIIASAAQLSMGFA). Topologically, residues 24–35 (ASHLPPMTHLWD) are periplasmic. Residues 36-56 (FIAALLAFGLDARILLLGLLG) traverse the membrane as a helical segment. Topologically, residues 57–76 (YLLSVFCWYKTLHKLALSKA) are cytoplasmic. Residues 77 to 97 (YALLSMSYVLVWIASMVLPGW) form a helical membrane-spanning segment. Over 98–100 (EGT) the chain is Periplasmic. A helical membrane pass occupies residues 101 to 121 (FSLKALLGVACIMSGLMLIFL). Topologically, residues 122-128 (PTTKQRY) are cytoplasmic.

The protein belongs to the ArnF family. Heterodimer of ArnE and ArnF.

The protein resides in the cell inner membrane. Its pathway is bacterial outer membrane biogenesis; lipopolysaccharide biosynthesis. Functionally, translocates 4-amino-4-deoxy-L-arabinose-phosphoundecaprenol (alpha-L-Ara4N-phosphoundecaprenol) from the cytoplasmic to the periplasmic side of the inner membrane. This Escherichia coli O45:K1 (strain S88 / ExPEC) protein is Probable 4-amino-4-deoxy-L-arabinose-phosphoundecaprenol flippase subunit ArnF.